The sequence spans 376 residues: MLGAARRQLGSGPMLGQVLRRLRPATAAAADAARAYSAAAKEMTVREALNSALDEEMSADPSVFLMGEEVGEYQGAYKISKGLLDKYGPERVLDTPITEAGFTGIAVGAAYQGLRPVVEFMTFNFSMQAIDHIINSAAKSNYMSAGQISVPIVFRGPNGAAAGVGAQHSQCYAAWYAHVPGLKVLVPYSAEDARGLLKAAIRDPDPVVFLENELLYGESFPISAEVLDSSFALPIGKAKIEREGKDVTITAYSKMVGYALQAADILSKEGISAEVINLRSIRPLDRATINASVRKTNRLVTIEESFPQHGIGAEICMSVVEESFEYLDAPVERIAGADVPMPYAANLERMAVPQVDDIVRAAKRACYRAVPMAATA.

A mitochondrion-targeting transit peptide spans 1–36; the sequence is MLGAARRQLGSGPMLGQVLRRLRPATAAAADAARAY. Residue glutamate 99 participates in thiamine diphosphate binding. Isoleucine 152, alanine 200, isoleucine 201, and aspartate 203 together coordinate K(+).

As to quaternary structure, tetramer of 2 alpha and 2 beta subunits. Thiamine diphosphate serves as cofactor.

It localises to the mitochondrion matrix. The enzyme catalyses N(6)-[(R)-lipoyl]-L-lysyl-[protein] + pyruvate + H(+) = N(6)-[(R)-S(8)-acetyldihydrolipoyl]-L-lysyl-[protein] + CO2. In terms of biological role, the pyruvate dehydrogenase complex catalyzes the overall conversion of pyruvate to acetyl-CoA and CO(2). It contains multiple copies of three enzymatic components: pyruvate dehydrogenase (E1), dihydrolipoamide acetyltransferase (E2) and lipoamide dehydrogenase (E3). In Oryza sativa subsp. japonica (Rice), this protein is Pyruvate dehydrogenase E1 component subunit beta-2, mitochondrial.